The following is a 276-amino-acid chain: N-acyl homoserine lactonase AiiB (276 aa).

Zn(2+) contacts are provided by histidine 111, histidine 113, histidine 116, histidine 191, aspartate 213, and histidine 259.

This sequence belongs to the metallo-beta-lactamase superfamily. It depends on Zn(2+) as a cofactor.

It carries out the reaction an N-acyl-L-homoserine lactone + H2O = an N-acyl-L-homoserine + H(+). The polypeptide is N-acyl homoserine lactonase AiiB (Agrobacterium fabrum (strain C58 / ATCC 33970) (Agrobacterium tumefaciens (strain C58))).